A 247-amino-acid polypeptide reads, in one-letter code: 2,3-bisphosphoglycerate-dependent phosphoglycerate mutase (247 aa).

Substrate-binding positions include 8–15, 21–22, Arg60, 87–90, Lys98, 114–115, and 183–184; these read RHGQSLWN, TG, ERHY, RR, and GN. Residue His9 is the Tele-phosphohistidine intermediate of the active site. Glu87 acts as the Proton donor/acceptor in catalysis.

Belongs to the phosphoglycerate mutase family. BPG-dependent PGAM subfamily.

It catalyses the reaction (2R)-2-phosphoglycerate = (2R)-3-phosphoglycerate. It participates in carbohydrate degradation; glycolysis; pyruvate from D-glyceraldehyde 3-phosphate: step 3/5. Its function is as follows. Catalyzes the interconversion of 2-phosphoglycerate and 3-phosphoglycerate. The sequence is that of 2,3-bisphosphoglycerate-dependent phosphoglycerate mutase from Hydrogenobaculum sp. (strain Y04AAS1).